The following is a 467-amino-acid chain: Argininosuccinate lyase (467 aa).

Belongs to the lyase 1 family. Argininosuccinate lyase subfamily.

The protein localises to the cytoplasm. The catalysed reaction is 2-(N(omega)-L-arginino)succinate = fumarate + L-arginine. The protein operates within amino-acid biosynthesis; L-arginine biosynthesis; L-arginine from L-ornithine and carbamoyl phosphate: step 3/3. In Sinorhizobium fredii (strain NBRC 101917 / NGR234), this protein is Argininosuccinate lyase.